The following is a 155-amino-acid chain: MADRARAARMAKRIQTIVANTIEHSVKDRRLELVTITDTQLTGDLHDATVFYTVRGRTLDEEPDREQAAEALHRARGQLRKAVGDQLGVRFTPTLTFTLDTVPETSARLEELLAQARQRDQEVARQAEGATPAGDANPYKTSPHEGRPESEADGW.

Composition is skewed to basic and acidic residues over residues 116–125 and 142–155; these read ARQRDQEVAR and SPHE…ADGW. The segment at 116–155 is disordered; that stretch reads ARQRDQEVARQAEGATPAGDANPYKTSPHEGRPESEADGW.

This sequence belongs to the RbfA family. In terms of assembly, monomer. Binds 30S ribosomal subunits, but not 50S ribosomal subunits or 70S ribosomes.

The protein localises to the cytoplasm. One of several proteins that assist in the late maturation steps of the functional core of the 30S ribosomal subunit. Associates with free 30S ribosomal subunits (but not with 30S subunits that are part of 70S ribosomes or polysomes). Required for efficient processing of 16S rRNA. May interact with the 5'-terminal helix region of 16S rRNA. In Corynebacterium kroppenstedtii (strain DSM 44385 / JCM 11950 / CIP 105744 / CCUG 35717), this protein is Ribosome-binding factor A.